The following is a 297-amino-acid chain: Iron-sulfur cluster assembly SufBD family protein ycf24 (297 aa).

This sequence belongs to the iron-sulfur cluster assembly SufBD family.

The protein localises to the plastid. The protein resides in the chloroplast. This is Iron-sulfur cluster assembly SufBD family protein ycf24 (ycf24) from Antithamnion sp. (Red alga).